The following is a 62-amino-acid chain: uncharacterized protein (62 aa).

A run of 2 helical transmembrane segments spans residues 9 to 29 (HNEL…ALIG) and 42 to 62 (AAVV…LQLL).

It localises to the membrane. This is an uncharacterized protein from Saccharomyces cerevisiae (strain ATCC 204508 / S288c) (Baker's yeast).